A 781-amino-acid polypeptide reads, in one-letter code: Protein translocase subunit SecA 2 (781 aa).

Residues Q85, 103 to 107, and D491 contribute to the ATP site; that span reads GEGKT.

The protein belongs to the SecA family. In terms of assembly, monomer and homodimer. Part of the essential Sec protein translocation apparatus which comprises SecA, SecYEG and auxiliary proteins SecDF. Other proteins may also be involved.

It is found in the cell membrane. Its subcellular location is the cytoplasm. The catalysed reaction is ATP + H2O + cellular proteinSide 1 = ADP + phosphate + cellular proteinSide 2.. Its function is as follows. Part of the Sec protein translocase complex. Interacts with the SecYEG preprotein conducting channel. Has a central role in coupling the hydrolysis of ATP to the transfer of proteins into and across the cell membrane, serving as an ATP-driven molecular motor driving the stepwise translocation of polypeptide chains across the membrane. This is Protein translocase subunit SecA 2 from Clostridioides difficile (strain 630) (Peptoclostridium difficile).